A 239-amino-acid chain; its full sequence is tRNA (guanine-N(1)-)-methyltransferase (239 aa).

Residues G108 and 127–132 (LGDYVL) contribute to the S-adenosyl-L-methionine site.

It belongs to the RNA methyltransferase TrmD family. As to quaternary structure, homodimer.

Its subcellular location is the cytoplasm. It carries out the reaction guanosine(37) in tRNA + S-adenosyl-L-methionine = N(1)-methylguanosine(37) in tRNA + S-adenosyl-L-homocysteine + H(+). In terms of biological role, specifically methylates guanosine-37 in various tRNAs. The polypeptide is tRNA (guanine-N(1)-)-methyltransferase (Streptococcus pneumoniae serotype 2 (strain D39 / NCTC 7466)).